The chain runs to 441 residues: Maltose-6'-phosphate glucosidase MalH (441 aa).

4–70 serves as a coordination point for NAD(+); that stretch reads FSVVIAGGGS…PEIEFLATTN (67 aa). Positions 93 and 147 each coordinate substrate. Position 169 (cysteine 169) interacts with Mn(2+). Aspartate 170 serves as the catalytic Proton donor. Residue histidine 200 participates in Mn(2+) binding. The Proton acceptor role is filled by tyrosine 264. Arginine 284 is a binding site for substrate.

As to quaternary structure, homotetramer. NAD(+) is required as a cofactor. Mn(2+) serves as cofactor.

It carries out the reaction alpha-maltose 6'-phosphate + H2O = D-glucose 6-phosphate + D-glucose. Its function is as follows. Catalyzes the hydrolysis of O-alpha-linked disaccharide 6-phosphates, including maltose-6'P and all five phosphorylated isomers of sucrose, but not sucrose-6P. Does not hydrolyze beta-linked disaccharide 6-phosphates such as cellobiose-6'P and gentiobiose-6'P. Is involved in the dissimilation of maltose and related O-alpha-linked glucosides produced via the phosphoenolpyruvate-dependent sugar phosphotransferase system (PEP-PTS). This Clostridium acetobutylicum (strain ATCC 824 / DSM 792 / JCM 1419 / IAM 19013 / LMG 5710 / NBRC 13948 / NRRL B-527 / VKM B-1787 / 2291 / W) protein is Maltose-6'-phosphate glucosidase MalH (malH).